We begin with the raw amino-acid sequence, 215 residues long: Large ribosomal subunit protein uL1 (215 aa).

Belongs to the universal ribosomal protein uL1 family. In terms of assembly, part of the 50S ribosomal subunit.

In terms of biological role, binds directly to 23S rRNA. Probably involved in E site tRNA release. Protein L1 is also a translational repressor protein, it controls the translation of its operon by binding to its mRNA. This is Large ribosomal subunit protein uL1 from Cenarchaeum symbiosum (strain A).